We begin with the raw amino-acid sequence, 446 residues long: Tubulin beta chain (446 aa).

Positions 11, 69, 138, 142, 143, 144, 204, and 226 each coordinate GTP. Mg(2+) is bound at residue Glu-69. Residues Tyr-425 to Glu-446 form a disordered region. A compositionally biased stretch (acidic residues) spans Glu-432–Glu-446.

It belongs to the tubulin family. As to quaternary structure, dimer of alpha and beta chains. A typical microtubule is a hollow water-filled tube with an outer diameter of 25 nm and an inner diameter of 15 nM. Alpha-beta heterodimers associate head-to-tail to form protofilaments running lengthwise along the microtubule wall with the beta-tubulin subunit facing the microtubule plus end conferring a structural polarity. Microtubules usually have 13 protofilaments but different protofilament numbers can be found in some organisms and specialized cells. Mg(2+) serves as cofactor.

The protein resides in the cytoplasm. It is found in the cytoskeleton. In terms of biological role, tubulin is the major constituent of microtubules, a cylinder consisting of laterally associated linear protofilaments composed of alpha- and beta-tubulin heterodimers. Microtubules grow by the addition of GTP-tubulin dimers to the microtubule end, where a stabilizing cap forms. Below the cap, tubulin dimers are in GDP-bound state, owing to GTPase activity of alpha-tubulin. This chain is Tubulin beta chain (TUB2), found in Blumeria hordei (Barley powdery mildew).